The following is a 601-amino-acid chain: Deoxyhypusine synthase (601 aa).

Residues 109–113 and 184–186 contribute to the NAD(+) site; these read ANLMG and SGG. A spermidine-binding site is contributed by 189–190; that stretch reads EH. Positions 210 to 242 are disordered; sequence GHVSSTVSSEATAPPKGLQQRAEKPLGTRAAAG. Positions 211–220 are enriched in polar residues; the sequence is HVSSTVSSEA. Asp-398 is a binding site for NAD(+). Positions 411 to 451 are disordered; the sequence is PAARPAHRKGGPVADENAGNSKELKRSRKASSSSSTSATAV. Positions 440-451 are enriched in low complexity; that stretch reads ASSSSSTSATAV. Gly-489 serves as a coordination point for NAD(+). A spermidine-binding site is contributed by His-494. 514-515 contacts NAD(+); the sequence is NG. Spermidine contacts are provided by residues 520 to 522 and 529 to 535; these read GSD and EALSWGK. The active-site Nucleophile is the Lys-535. 548–549 lines the NAD(+) pocket; that stretch reads EV. The segment at 568–601 is disordered; sequence RRATDDAQPRRKRSSRGARPPQDVSGHSHLCRGE.

This sequence belongs to the deoxyhypusine synthase family. As to quaternary structure, homodimer. The cofactor is NAD(+).

It catalyses the reaction [eIF5A protein]-L-lysine + spermidine = [eIF5A protein]-deoxyhypusine + propane-1,3-diamine. The protein operates within protein modification; eIF5A hypusination. N1-guanyl-1,7-diaminoheptane has a small inhibitory effect on activity. Catalyzes the NAD-dependent oxidative cleavage of spermidine and the subsequent transfer of the butylamine moiety of spermidine to the epsilon-amino group of a specific lysine residue of the eIF-5A precursor protein to form the intermediate deoxyhypusine residue. This Leishmania donovani protein is Deoxyhypusine synthase.